Here is a 135-residue protein sequence, read N- to C-terminus: 6,7-dimethyl-8-ribityllumazine synthase (135 aa).

Residues Phe12, 44-46 (AYD), and 68-70 (CVI) each bind 5-amino-6-(D-ribitylamino)uracil. 73-74 (AT) contacts (2S)-2-hydroxy-3-oxobutyl phosphate. His76 functions as the Proton donor in the catalytic mechanism. Leu101 contributes to the 5-amino-6-(D-ribitylamino)uracil binding site. Position 116 (Arg116) interacts with (2S)-2-hydroxy-3-oxobutyl phosphate.

This sequence belongs to the DMRL synthase family.

The enzyme catalyses (2S)-2-hydroxy-3-oxobutyl phosphate + 5-amino-6-(D-ribitylamino)uracil = 6,7-dimethyl-8-(1-D-ribityl)lumazine + phosphate + 2 H2O + H(+). It functions in the pathway cofactor biosynthesis; riboflavin biosynthesis; riboflavin from 2-hydroxy-3-oxobutyl phosphate and 5-amino-6-(D-ribitylamino)uracil: step 1/2. Functionally, catalyzes the formation of 6,7-dimethyl-8-ribityllumazine by condensation of 5-amino-6-(D-ribitylamino)uracil with 3,4-dihydroxy-2-butanone 4-phosphate. This is the penultimate step in the biosynthesis of riboflavin. The protein is 6,7-dimethyl-8-ribityllumazine synthase of Methanoculleus marisnigri (strain ATCC 35101 / DSM 1498 / JR1).